Consider the following 340-residue polypeptide: Oxygen-dependent coproporphyrinogen-III oxidase (340 aa).

The segment covering 1 to 14 (MTVSPTTQPQTNHS) has biased composition (polar residues). The tract at residues 1 to 22 (MTVSPTTQPQTNHSLPPADAKQ) is disordered. Position 109 (serine 109) interacts with substrate. A divalent metal cation-binding residues include histidine 113 and histidine 123. The active-site Proton donor is the histidine 123. Residue 125–127 (NYR) participates in substrate binding. Positions 157 and 187 each coordinate a divalent metal cation. The important for dimerization stretch occupies residues 278 to 313 (YVEFNLVYDRGTIFGLQTNGRTESILMSLPPLVRWQ). Substrate is bound at residue 296 to 298 (NGR).

This sequence belongs to the aerobic coproporphyrinogen-III oxidase family. As to quaternary structure, homodimer. It depends on a divalent metal cation as a cofactor.

The protein localises to the cytoplasm. The enzyme catalyses coproporphyrinogen III + O2 + 2 H(+) = protoporphyrinogen IX + 2 CO2 + 2 H2O. It participates in porphyrin-containing compound metabolism; protoporphyrin-IX biosynthesis; protoporphyrinogen-IX from coproporphyrinogen-III (O2 route): step 1/1. Its function is as follows. Involved in the heme and chlorophyll biosynthesis. Catalyzes the aerobic oxidative decarboxylation of propionate groups of rings A and B of coproporphyrinogen-III to yield the vinyl groups in protoporphyrinogen-IX. This is Oxygen-dependent coproporphyrinogen-III oxidase from Synechocystis sp. (strain ATCC 27184 / PCC 6803 / Kazusa).